A 313-amino-acid chain; its full sequence is Aspartate carbamoyltransferase catalytic subunit (313 aa).

Residues Arg-59 and Thr-60 each contribute to the carbamoyl phosphate site. Lys-87 contacts L-aspartate. Carbamoyl phosphate is bound by residues Arg-109, His-137, and Gln-140. 2 residues coordinate L-aspartate: Arg-170 and Arg-224. The carbamoyl phosphate site is built by Gly-265 and Pro-266.

It belongs to the aspartate/ornithine carbamoyltransferase superfamily. ATCase family. In terms of assembly, heterododecamer (2C3:3R2) of six catalytic PyrB chains organized as two trimers (C3), and six regulatory PyrI chains organized as three dimers (R2).

It catalyses the reaction carbamoyl phosphate + L-aspartate = N-carbamoyl-L-aspartate + phosphate + H(+). It functions in the pathway pyrimidine metabolism; UMP biosynthesis via de novo pathway; (S)-dihydroorotate from bicarbonate: step 2/3. Catalyzes the condensation of carbamoyl phosphate and aspartate to form carbamoyl aspartate and inorganic phosphate, the committed step in the de novo pyrimidine nucleotide biosynthesis pathway. This chain is Aspartate carbamoyltransferase catalytic subunit, found in Sinorhizobium medicae (strain WSM419) (Ensifer medicae).